Reading from the N-terminus, the 319-residue chain is Malate dehydrogenase (319 aa).

NAD(+)-binding positions include 10–15 (GAGQIG) and Asp-34. Residues Arg-85 and Arg-91 each contribute to the substrate site. Residues Asn-98 and 121–123 (ITN) contribute to the NAD(+) site. Substrate is bound by residues Asn-123 and Arg-154. The active-site Proton acceptor is His-178.

Belongs to the LDH/MDH superfamily. MDH type 3 family.

The catalysed reaction is (S)-malate + NAD(+) = oxaloacetate + NADH + H(+). Functionally, catalyzes the reversible oxidation of malate to oxaloacetate. This Rhodospirillum centenum (strain ATCC 51521 / SW) protein is Malate dehydrogenase.